Reading from the N-terminus, the 140-residue chain is RxLR effector protein CRE9 (140 aa).

Residues 1–24 (MRTSVFVALVVATFVATCISFTSA) form the signal peptide. The RxLR-dEER motif lies at 43-61 (RTLAEADDWWLASTNTEER). The helical transmembrane segment at 119–139 (LKILYGALLAGLIIVGVEAML) threads the bilayer.

The protein belongs to the RxLR effector family.

It is found in the secreted. The protein localises to the host cell. Its subcellular location is the membrane. Effector that is involved in host plant infection. Contributes to virulence during the early infection stage, by inhibiting plant defense responses induced by both PAMP-triggered immunity (PTI) and effector-triggered immunity (ETI). The protein is RxLR effector protein CRE9 of Phytophthora infestans (strain T30-4) (Potato late blight agent).